Consider the following 740-residue polypeptide: Zinc finger CCCH domain-containing protein 14 (740 aa).

Disordered regions lie at residues S82–G240, V254–V314, I390–E426, and S444–T469. Composition is skewed to basic and acidic residues over residues E87–R158 and E176–H185. Residues D186–E200 show a composition bias toward basic residues. A compositionally biased stretch (polar residues) spans I204 to A214. Over residues S393–N409 the composition is skewed to polar residues. Positions I414 to E426 are enriched in acidic residues. 2 C3H1-type zinc fingers span residues H499–T522 and T523–P543. The disordered stretch occupies residues I623–P661. A compositionally biased stretch (basic and acidic residues) spans E632–A652. 3 C3H1-type zinc fingers span residues L668–K691, C674–K691, and C693–K709.

This sequence belongs to the ZC3H14 family.

The protein resides in the nucleus. It is found in the cytoplasm. Its function is as follows. RNA-binding protein involved in the biogenesis of circular RNAs (circRNAs), which are produced by back-splicing circularization of pre-mRNAs. The polypeptide is Zinc finger CCCH domain-containing protein 14 (sut-2) (Caenorhabditis elegans).